The chain runs to 133 residues: NLP effector protein 14 (133 aa).

A Conserved undecapeptide motifI I motif is present at residues 1-9 (MYSWYFPKD). The short motif at 16–22 (GHRHDWE) is the Hepta-peptide GHRHDWE motif II element.

The protein belongs to the Necrosis inducing protein (NPP1) family.

Its subcellular location is the secreted. Its function is as follows. Secreted effector that contributes strongly to virulence during infection by P.capsici. Causes large necrotic areas in both host C.annuum and non-host N.benthamiana. The chain is NLP effector protein 14 from Phytophthora capsici.